The primary structure comprises 738 residues: Catalase-peroxidase (738 aa).

Positions 1-24 (MSEEHPPIAEANSQPSNGCPVAGG) are disordered. The segment at residues 108 to 231 (WHAAGTYRVG…LAAVQMGLIY (124 aa)) is a cross-link (tryptophyl-tyrosyl-methioninium (Trp-Tyr) (with M-257)). Histidine 109 serves as the catalytic Proton acceptor. The segment at residues 231 to 257 (YVNPEGPNGNPDPLAAAIDIRETFGRM) is a cross-link (tryptophyl-tyrosyl-methioninium (Tyr-Met) (with W-108)). Heme b is bound at residue histidine 272.

It belongs to the peroxidase family. Peroxidase/catalase subfamily. Homodimer or homotetramer. Heme b serves as cofactor. Formation of the three residue Trp-Tyr-Met cross-link is important for the catalase, but not the peroxidase activity of the enzyme.

It catalyses the reaction H2O2 + AH2 = A + 2 H2O. The catalysed reaction is 2 H2O2 = O2 + 2 H2O. In terms of biological role, bifunctional enzyme with both catalase and broad-spectrum peroxidase activity. The protein is Catalase-peroxidase of Mycobacteroides abscessus (strain ATCC 19977 / DSM 44196 / CCUG 20993 / CIP 104536 / JCM 13569 / NCTC 13031 / TMC 1543 / L948) (Mycobacterium abscessus).